Consider the following 265-residue polypeptide: Ribosomal RNA small subunit methyltransferase G (265 aa).

S-adenosyl-L-methionine is bound by residues Gly75, Leu80, and Arg145. The disordered stretch occupies residues 212–265 (RAVRSSQRTRAESRGGRGDGERHDGRQVRRTSRDSLRSREVGRDQPTRGQSRST). The span at 220-257 (TRAESRGGRGDGERHDGRQVRRTSRDSLRSREVGRDQP) shows a compositional bias: basic and acidic residues.

This sequence belongs to the methyltransferase superfamily. RNA methyltransferase RsmG family.

Its subcellular location is the cytoplasm. In terms of biological role, specifically methylates the N7 position of guanine in position 518 of 16S rRNA. The protein is Ribosomal RNA small subunit methyltransferase G of Frankia casuarinae (strain DSM 45818 / CECT 9043 / HFP020203 / CcI3).